We begin with the raw amino-acid sequence, 112 residues long: MGVEKQVIRPGNGPKPAPGQTVTVHCTGFGKDGDLSQKFWSTKDEGQKPFSFQIGKGAVIKGWDEGVIGMQIGEVARLRCSSDYAYGAGGFPAWGIQPNSVLDFEIEVLSVQ.

Residues 1-26 (MGVEKQVIRPGNGPKPAPGQTVTVHC) form a disordered region. Residues 19–112 (GQTVTVHCTG…DFEIEVLSVQ (94 aa)) form the PPIase FKBP-type domain. A disulfide bond links Cys26 and Cys80.

This sequence belongs to the FKBP-type PPIase family. In terms of assembly, interacts with FIP37 and with the immunosuppressive drug FK506. Its interaction with FIP37 is inhibited by FK506. Interacts with TOR in a rapamycin-dependent manner.

The protein resides in the cytoplasm. The catalysed reaction is [protein]-peptidylproline (omega=180) = [protein]-peptidylproline (omega=0). In terms of biological role, PPIases accelerate the folding of proteins. It catalyzes the cis-trans isomerization of proline imidic peptide bonds in oligopeptides. Mediates rapamycin inactivation of TOR protein kinase activity. The chain is Peptidyl-prolyl cis-trans isomerase FKBP12 (FKBP12) from Arabidopsis thaliana (Mouse-ear cress).